The following is a 259-amino-acid chain: Probable ABC transporter permease protein RF_0080 (259 aa).

5 consecutive transmembrane segments (helical) span residues 13 to 35 (TIKFAQSVGSFSLFSFAAVSSII), 49 to 69 (LFIGFHSLPVVAMTTFFSGAV), 148 to 168 (VIAAIITMPCLVLIGDIIGVM), 195 to 215 (PIDVISGLVKAGVFGFIISII), and 237 to 257 (AVVNSSILILISNYLITELFF).

The protein belongs to the MlaE permease family.

It localises to the cell inner membrane. Functionally, could be part of an ABC transporter complex. The protein is Probable ABC transporter permease protein RF_0080 of Rickettsia felis (strain ATCC VR-1525 / URRWXCal2) (Rickettsia azadi).